The following is a 458-amino-acid chain: Cysteine protease ATG4C (458 aa).

Met1 carries the N-acetylmethionine modification. Catalysis depends on Cys111, which acts as the Nucleophile. Catalysis depends on residues Asp345 and His347. Ser451 bears the Phosphoserine mark. At Thr452 the chain carries Phosphothreonine.

The protein belongs to the peptidase C54 family.

The protein resides in the cytoplasm. The catalysed reaction is [protein]-C-terminal L-amino acid-glycyl-phosphatidylethanolamide + H2O = [protein]-C-terminal L-amino acid-glycine + a 1,2-diacyl-sn-glycero-3-phosphoethanolamine. Its activity is regulated as follows. Inhibited by N-ethylmaleimide. In terms of biological role, cysteine protease that plays a key role in autophagy by mediating both proteolytic activation and delipidation of ATG8 family proteins. The protease activity is required for proteolytic activation of ATG8 family proteins: cleaves the C-terminal amino acid of ATG8 proteins MAP1LC3 and GABARAPL2, to reveal a C-terminal glycine. Exposure of the glycine at the C-terminus is essential for ATG8 proteins conjugation to phosphatidylethanolamine (PE) and insertion to membranes, which is necessary for autophagy. In addition to the protease activity, also mediates delipidation of ATG8 family proteins. Catalyzes delipidation of PE-conjugated forms of ATG8 proteins during macroautophagy. Compared to ATG4B, the major protein for proteolytic activation of ATG8 proteins, shows weaker ability to cleave the C-terminal amino acid of ATG8 proteins, while it displays stronger delipidation activity. In contrast to other members of the family, weakly or not involved in phagophore growth during mitophagy. The polypeptide is Cysteine protease ATG4C (Mus musculus (Mouse)).